We begin with the raw amino-acid sequence, 167 residues long: Protein MIX23 (167 aa).

The segment at 81–108 (QLDQDRNTSKSPLKSQQQLPSSSTTQVS) is disordered. Low complexity predominate over residues 89 to 106 (SKSPLKSQQQLPSSSTTQ).

The protein belongs to the MIX23 family.

The chain is Protein MIX23 (cid2) from Schizosaccharomyces pombe (strain 972 / ATCC 24843) (Fission yeast).